The following is a 330-amino-acid chain: Beta-ketoacyl-[acyl-carrier-protein] synthase III (330 aa).

Catalysis depends on residues Cys118 and His257. The segment at 258-262 is ACP-binding; the sequence is QANLR. Residue Asn287 is part of the active site.

The protein belongs to the thiolase-like superfamily. FabH family. In terms of assembly, homodimer.

It localises to the cytoplasm. It carries out the reaction malonyl-[ACP] + acetyl-CoA + H(+) = 3-oxobutanoyl-[ACP] + CO2 + CoA. Its pathway is lipid metabolism; fatty acid biosynthesis. Its function is as follows. Catalyzes the condensation reaction of fatty acid synthesis by the addition to an acyl acceptor of two carbons from malonyl-ACP. Catalyzes the first condensation reaction which initiates fatty acid synthesis and may therefore play a role in governing the total rate of fatty acid production. Possesses both acetoacetyl-ACP synthase and acetyl transacylase activities. Its substrate specificity determines the biosynthesis of branched-chain and/or straight-chain of fatty acids. The sequence is that of Beta-ketoacyl-[acyl-carrier-protein] synthase III from Nitratidesulfovibrio vulgaris (strain DSM 19637 / Miyazaki F) (Desulfovibrio vulgaris).